The chain runs to 237 residues: UPF0758 protein Veis_1654 (237 aa).

Positions 115–237 (VFDTPDAVKH…ALSMAEMGLL (123 aa)) constitute an MPN domain. H186, H188, and D199 together coordinate Zn(2+). Positions 186–199 (HNHPSGSVQPSRAD) match the JAMM motif motif.

Belongs to the UPF0758 family.

This is UPF0758 protein Veis_1654 from Verminephrobacter eiseniae (strain EF01-2).